The sequence spans 138 residues: Large ribosomal subunit protein uL16m (138 aa).

The protein belongs to the universal ribosomal protein uL16 family.

The protein localises to the mitochondrion. The protein is Large ribosomal subunit protein uL16m (RPL16) of Chondrus crispus (Carrageen Irish moss).